Reading from the N-terminus, the 320-residue chain is ATP-dependent 6-phosphofructokinase (320 aa).

Glycine 12 is a binding site for ATP. ADP-binding positions include 22 to 26 (RGVVR) and 55 to 60 (RYSVSD). ATP-binding positions include 73-74 (RF) and 103-106 (GDGS). Aspartate 104 serves as a coordination point for Mg(2+). Position 126–128 (126–128 (TID)) interacts with substrate. Aspartate 128 functions as the Proton acceptor in the catalytic mechanism. Arginine 155 lines the ADP pocket. Substrate-binding positions include arginine 163 and 170-172 (MGR). ADP is bound by residues 186-188 (GCE), lysine 212, and 214-216 (KKH). Residues glutamate 223, arginine 244, and 250-253 (HIQR) contribute to the substrate site.

It belongs to the phosphofructokinase type A (PFKA) family. ATP-dependent PFK group I subfamily. Prokaryotic clade 'B1' sub-subfamily. As to quaternary structure, homotetramer. Mg(2+) is required as a cofactor.

The protein resides in the cytoplasm. The catalysed reaction is beta-D-fructose 6-phosphate + ATP = beta-D-fructose 1,6-bisphosphate + ADP + H(+). It participates in carbohydrate degradation; glycolysis; D-glyceraldehyde 3-phosphate and glycerone phosphate from D-glucose: step 3/4. Its activity is regulated as follows. Allosterically activated by ADP and other diphosphonucleosides, and allosterically inhibited by phosphoenolpyruvate. Catalyzes the phosphorylation of D-fructose 6-phosphate to fructose 1,6-bisphosphate by ATP, the first committing step of glycolysis. This Enterobacter cloacae protein is ATP-dependent 6-phosphofructokinase.